A 297-amino-acid polypeptide reads, in one-letter code: tRNA (guanine-N(7)-)-methyltransferase (297 aa).

The S-adenosyl-L-methionine site is built by E22, E47, D74, and D97. Residue D97 is part of the active site. Substrate contacts are provided by residues K101, D133, and T165 to E168.

This sequence belongs to the class I-like SAM-binding methyltransferase superfamily. TrmB family.

The catalysed reaction is guanosine(46) in tRNA + S-adenosyl-L-methionine = N(7)-methylguanosine(46) in tRNA + S-adenosyl-L-homocysteine. It participates in tRNA modification; N(7)-methylguanine-tRNA biosynthesis. In terms of biological role, catalyzes the formation of N(7)-methylguanine at position 46 (m7G46) in tRNA. The protein is tRNA (guanine-N(7)-)-methyltransferase of Aquifex aeolicus (strain VF5).